The sequence spans 339 residues: D-erythrose-4-phosphate dehydrogenase (339 aa).

12-13 is an NAD(+) binding site; the sequence is RI. Substrate contacts are provided by residues 154–156, Arg200, 213–214, and Arg236; these read SCT and TK. Cys155 acts as the Nucleophile in catalysis. Asn318 contributes to the NAD(+) binding site.

Belongs to the glyceraldehyde-3-phosphate dehydrogenase family. Epd subfamily. Homotetramer.

It is found in the cytoplasm. The enzyme catalyses D-erythrose 4-phosphate + NAD(+) + H2O = 4-phospho-D-erythronate + NADH + 2 H(+). The protein operates within cofactor biosynthesis; pyridoxine 5'-phosphate biosynthesis; pyridoxine 5'-phosphate from D-erythrose 4-phosphate: step 1/5. Its function is as follows. Catalyzes the NAD-dependent conversion of D-erythrose 4-phosphate to 4-phosphoerythronate. This chain is D-erythrose-4-phosphate dehydrogenase, found in Proteus mirabilis (strain HI4320).